The sequence spans 449 residues: Glucose-6-phosphate isomerase (449 aa).

Glu290 functions as the Proton donor in the catalytic mechanism. Catalysis depends on residues His311 and Lys425.

This sequence belongs to the GPI family.

The protein resides in the cytoplasm. The enzyme catalyses alpha-D-glucose 6-phosphate = beta-D-fructose 6-phosphate. Its pathway is carbohydrate biosynthesis; gluconeogenesis. It functions in the pathway carbohydrate degradation; glycolysis; D-glyceraldehyde 3-phosphate and glycerone phosphate from D-glucose: step 2/4. In terms of biological role, catalyzes the reversible isomerization of glucose-6-phosphate to fructose-6-phosphate. The chain is Glucose-6-phosphate isomerase from Clostridium tetani (strain Massachusetts / E88).